Reading from the N-terminus, the 953-residue chain is Coatomer subunit beta-1 (953 aa).

5 HEAT repeats span residues glutamate 49–alanine 87, proline 93–proline 127, glutamate 128–glycine 165, aspartate 314–valine 351, and glutamate 393–lysine 430.

In terms of assembly, oligomeric complex that consists of at least the alpha, beta, beta', gamma, delta, epsilon and zeta subunits.

It localises to the cytoplasm. The protein resides in the golgi apparatus membrane. The protein localises to the cytoplasmic vesicle. Its subcellular location is the COPI-coated vesicle membrane. Functionally, the coatomer is a cytosolic protein complex that binds to dilysine motifs and reversibly associates with Golgi non-clathrin-coated vesicles, which further mediate biosynthetic protein transport from the ER, via the Golgi up to the trans Golgi network. Coatomer complex is required for budding from Golgi membranes, and is essential for the retrograde Golgi-to-ER transport of dilysine-tagged proteins. The chain is Coatomer subunit beta-1 from Oryza sativa subsp. japonica (Rice).